A 553-amino-acid polypeptide reads, in one-letter code: Dihydrolipoyllysine-residue acetyltransferase component of pyruvate dehydrogenase complex (553 aa).

One can recognise a Lipoyl-binding 1 domain in the interval 4 to 78 (AIEIKVPDIG…SEGSVLVMLE (75 aa)). Lys-44 carries the N6-lipoyllysine modification. The interval 97 to 118 (AAAAPAPAPAPAAAPAAAPAAG) is disordered. The 75-residue stretch at 122–196 (TIEVKVPDIG…AEGTLLLILE (75 aa)) folds into the Lipoyl-binding 2 domain. Residue Lys-162 is modified to N6-lipoyllysine. The 38-residue stretch at 250-287 (HASPSVRKFARELGVDVSRVPGTGPKGRITQEDVQGYV) folds into the Peripheral subunit-binding (PSBD) domain. Residue His-526 is part of the active site.

Belongs to the 2-oxoacid dehydrogenase family. In terms of assembly, forms a 24-polypeptide structural core with octahedral symmetry. Requires (R)-lipoate as cofactor.

It catalyses the reaction N(6)-[(R)-dihydrolipoyl]-L-lysyl-[protein] + acetyl-CoA = N(6)-[(R)-S(8)-acetyldihydrolipoyl]-L-lysyl-[protein] + CoA. The pyruvate dehydrogenase complex catalyzes the overall conversion of pyruvate to acetyl-CoA and CO(2). It contains multiple copies of three enzymatic components: pyruvate dehydrogenase (E1), dihydrolipoamide acetyltransferase (E2) and lipoamide dehydrogenase (E3). This is Dihydrolipoyllysine-residue acetyltransferase component of pyruvate dehydrogenase complex (pdhB) from Cupriavidus necator (strain ATCC 17699 / DSM 428 / KCTC 22496 / NCIMB 10442 / H16 / Stanier 337) (Ralstonia eutropha).